A 237-amino-acid chain; its full sequence is 2-C-methyl-D-erythritol 4-phosphate cytidylyltransferase (237 aa).

This sequence belongs to the IspD/TarI cytidylyltransferase family. IspD subfamily.

The catalysed reaction is 2-C-methyl-D-erythritol 4-phosphate + CTP + H(+) = 4-CDP-2-C-methyl-D-erythritol + diphosphate. It functions in the pathway isoprenoid biosynthesis; isopentenyl diphosphate biosynthesis via DXP pathway; isopentenyl diphosphate from 1-deoxy-D-xylulose 5-phosphate: step 2/6. Catalyzes the formation of 4-diphosphocytidyl-2-C-methyl-D-erythritol from CTP and 2-C-methyl-D-erythritol 4-phosphate (MEP). The sequence is that of 2-C-methyl-D-erythritol 4-phosphate cytidylyltransferase from Vibrio vulnificus (strain CMCP6).